Here is a 704-residue protein sequence, read N- to C-terminus: Elongation factor G (704 aa).

One can recognise a tr-type G domain in the interval 8 to 291; it reads ANVRNIGIMA…AVIEYLPSPV (284 aa). GTP is bound by residues 17 to 24, 90 to 94, and 144 to 147; these read AHIDAGKT, DTPGH, and NKMD.

This sequence belongs to the TRAFAC class translation factor GTPase superfamily. Classic translation factor GTPase family. EF-G/EF-2 subfamily.

It localises to the cytoplasm. In terms of biological role, catalyzes the GTP-dependent ribosomal translocation step during translation elongation. During this step, the ribosome changes from the pre-translocational (PRE) to the post-translocational (POST) state as the newly formed A-site-bound peptidyl-tRNA and P-site-bound deacylated tRNA move to the P and E sites, respectively. Catalyzes the coordinated movement of the two tRNA molecules, the mRNA and conformational changes in the ribosome. The protein is Elongation factor G of Chlorobium phaeobacteroides (strain BS1).